The following is a 213-amino-acid chain: Riboflavin/roseoflavin transporter RibM (213 aa).

The next 5 helical transmembrane spans lie at 15–35 (HIIWSDMVGNILGLITLALGF), 38–58 (SLWTWPVQFLSGLVLFGAFYG), 107–129 (IAAAAVGTVAVALLFKAYPSLSW), 136–158 (YIFVGTIVAMYAQARGMVEFWFA), and 171–193 (FANGYAFSGFVYVIYGALVLWGM).

The protein belongs to the nicotinamide ribonucleoside (NR) uptake permease (TC 4.B.1) family.

It is found in the cell membrane. Functionally, transports riboflavin and roseoflavin. Can also transport FMN and FAD. May confer roseoflavin resistance to S.davawensis, which naturally produces this antibiotic during stationary growth phase. The polypeptide is Riboflavin/roseoflavin transporter RibM (Streptomyces davaonensis (strain DSM 101723 / JCM 4913 / KCC S-0913 / 768)).